The following is a 445-amino-acid chain: Probable D-serine dehydratase (445 aa).

The residue at position 111 (Lys-111) is an N6-(pyridoxal phosphate)lysine.

Belongs to the serine/threonine dehydratase family. DsdA subfamily. Pyridoxal 5'-phosphate is required as a cofactor.

It catalyses the reaction D-serine = pyruvate + NH4(+). In Burkholderia pseudomallei (strain K96243), this protein is Probable D-serine dehydratase.